The primary structure comprises 395 residues: GPI-anchor transamidase (395 aa).

The N-terminal stretch at M1–A27 is a signal peptide. Topologically, residues G28–G368 are lumenal. Ca(2+) contacts are provided by D79, I82, E118, and D120. H164 serves as the catalytic Proton donor. The active-site Nucleophile; acyl-thioester intermediate is the C206. A protein is bound by residues C206, S232, and S234. The segment at D231–Q236 is autoinhibitory loop. A disulfide bond links C275 and C280. A helical transmembrane segment spans residues G369–T385. The Cytoplasmic portion of the chain corresponds to Y386–F395.

The protein belongs to the peptidase C13 family. Heteropentamer. Part of the GPI-anchor transamidase complex, consisting of PIGK, PIGT, PIGS, PIGU and GAA1. Interacts with GPAA1. Interacts with PIGT; this interaction, via a disulfide link, stabilizes the expression of GAA1 and PIGK and links them to PIGS. The disulfide bond between PIGK/GPI8 and PIGT is important for normal enzyme activity.

It localises to the endoplasmic reticulum membrane. It participates in glycolipid biosynthesis; glycosylphosphatidylinositol-anchor biosynthesis. With respect to regulation, in the absence of proproteins substrates, exists in an inactive state with a disrupted catalytic site by an autoinhibitory loop. The binding of proprotein substrates, particularly the CSP region, to GPI-T triggers concerted conformational changes that alleviate the inhibition by the autoinhibitory loop. Meanwhile, proprotein residues near the omega- site induce the formation of a catalytic cleft for catalysis, following which the products are released and GPI-T reverts to the inactive state. In terms of biological role, catalytic subunit of the glycosylphosphatidylinositol-anchor (GPI-anchor) transamidase (GPI-T) complex that catalyzes the formation of the linkage between a proprotein and a GPI-anchor and participates in GPI anchored protein biosynthesis. Recognizes diverse proproteins at a C-terminal signal peptide (CSP) region that lacks consensus sequence and replaces it with a GPI-anchor via a transamidation reaction. Transamidation catalysis reaction follows a two-phase mechanism. In the acyl-enzyme phase, the carbonyl group of the proproteins's omega-site undergoes a nucleophilic attack forming an enzyme-substrate thioester bond. Followed by a general acid catalysis that allows CSP releasing, regenerating the carbonyl, and forming the acyl-enzyme intermediate. In the GPI-anchor attachment phase, the amino group of the GPI-anchor's ethanolamine phosphate, the one on third mannose (EtNP3), mediates a nucleophilic attack on the carbonyl of the acyl-enzyme intermediate, replacing the CSP, allowing GPI-anchor attachment to the omega-residue, therefore forming the product and freeing the enzyme. The polypeptide is GPI-anchor transamidase (Mus musculus (Mouse)).